The sequence spans 378 residues: 7-methylxanthine methyltransferase 1 (378 aa).

8 residues coordinate S-adenosyl-L-homocysteine: Tyr-18, Cys-61, Asn-66, Asp-100, Leu-101, Ser-139, Phe-140, and Cys-156. Theobromine contacts are provided by Tyr-157, His-160, and Trp-161. The Mg(2+) site is built by Asn-178, Asp-260, Phe-262, and Asn-263. Tyr-362 contacts theobromine.

It belongs to the methyltransferase superfamily. Type-7 methyltransferase family. The cofactor is Mg(2+). Mainly expressed, at low levels, in leaves and fruits (grains). Also present, at lower levels, in roots, stamens and pistils.

It localises to the cytoplasm. The catalysed reaction is 7-methylxanthine + S-adenosyl-L-methionine = theobromine + S-adenosyl-L-homocysteine + H(+). Its pathway is alkaloid biosynthesis. Functionally, involved in the biosynthesis of caffeine. Catalyzes the conversion of 7-methylxanthine (7mX) to theobromine and of paraxanthine to caffeine. The protein is 7-methylxanthine methyltransferase 1 of Coffea canephora (Robusta coffee).